The sequence spans 525 residues: Protein translocase subunit SecD (525 aa).

6 helical membrane passes run 9-29, 368-388, 392-412, 415-435, 460-480, and 487-507; these read LYLV…SLLG, VLIG…GFGM, LAVV…QATL, PGIA…VLIF, FSTI…LYQF, and GFAV…IFVT.

The protein belongs to the SecD/SecF family. SecD subfamily. In terms of assembly, forms a complex with SecF. Part of the essential Sec protein translocation apparatus which comprises SecA, SecYEG and auxiliary proteins SecDF-YajC and YidC.

The protein localises to the cell inner membrane. In terms of biological role, part of the Sec protein translocase complex. Interacts with the SecYEG preprotein conducting channel. SecDF uses the proton motive force (PMF) to complete protein translocation after the ATP-dependent function of SecA. The polypeptide is Protein translocase subunit SecD (Magnetococcus marinus (strain ATCC BAA-1437 / JCM 17883 / MC-1)).